Consider the following 143-residue polypeptide: Hypoxic response protein 1 (143 aa).

2 CBS domains span residues 8 to 65 (MNAG…GLDP) and 73 to 131 (LARD…IVQF). A disulfide bridge connects residues Cys14 and Cys39. Positions 97 and 122 each coordinate Zn(2+).

Homodimer.

The protein resides in the secreted. Unlike some other CBS-domain containing proteins does not seem to bind AMP. In Mycobacterium tuberculosis (strain CDC 1551 / Oshkosh), this protein is Hypoxic response protein 1 (hrp1).